We begin with the raw amino-acid sequence, 458 residues long: NADH-ubiquinone oxidoreductase chain 4 (458 aa).

13 helical membrane passes run 22–42 (FFWTAFISSSFLMPFLFFIFT), 63–83 (MISAPLVFLSLWMLPLMALAS), 96–116 (LLYITILIIMQTLLILTFLST), 117–137 (NLMNFYILFESSLIPILLIIF), 150–170 (IYLSFYTLIGSLPLLASLLFL), 194–214 (ILWLGCFSALLIKTPLYGFHL), 224–244 (TIAGSMTLAALMLKLGGYGMI), 257–277 (LSLILISIALWGAVMTSFICL), 284–306 (ALIAYSSVSHMGLMTASIMTLSL), 311–333 (GAFIMMIAHGLSSSALFFLANSN), 350–370 (MLLPLTSLWWLFIILTNLAMP), 391–413 (LTFPFLALTMVITTTYSMSMFML), and 434–454 (LTLFLHLFPMIAIMAYPNMII).

Belongs to the complex I subunit 4 family.

Its subcellular location is the mitochondrion membrane. The catalysed reaction is a ubiquinone + NADH + 5 H(+)(in) = a ubiquinol + NAD(+) + 4 H(+)(out). Core subunit of the mitochondrial membrane respiratory chain NADH dehydrogenase (Complex I) that is believed to belong to the minimal assembly required for catalysis. Complex I functions in the transfer of electrons from NADH to the respiratory chain. The immediate electron acceptor for the enzyme is believed to be ubiquinone. In Myxine glutinosa (Atlantic hagfish), this protein is NADH-ubiquinone oxidoreductase chain 4 (MT-ND4).